The chain runs to 214 residues: MEINVDEEAGIIKEETVPLLDDQNRNRDLPDIERNTMMQKAIGKTFQTTANLANLLPTGTVLAFQILSPICTNVGRCDLTSRFMTALLVSICGFSCFILSFTDSYKDLNGSVCYGFATIHGFWIIDGSATLPQELSKSYKLRFIDFVHAIMSFLVFGAVVLFDQNVVNCFYPEPSAEVVELLTTLPVAVGVFCSMVFAKFPTTRHGIGFPLSAK.

The next 4 membrane-spanning stretches (helical) occupy residues 52 to 72 (LANLLPTGTVLAFQILSPICT), 83 to 103 (FMTALLVSICGFSCFILSFTD), 143 to 163 (FIDFVHAIMSFLVFGAVVLFD), and 178 to 198 (VVELLTTLPVAVGVFCSMVFA).

This sequence belongs to the plant DMP1 protein family. As to expression, expressed constitutively in leaves, stems, flowers, siliques and roots (e.g. root hairs).

It is found in the vacuole membrane. Functionally, involved in membrane remodeling. The polypeptide is Protein DMP6 (Arabidopsis thaliana (Mouse-ear cress)).